A 671-amino-acid chain; its full sequence is UvrABC system protein B (671 aa).

The region spanning glutamate 25–arginine 412 is the Helicase ATP-binding domain. Position 38-45 (glycine 38–threonine 45) interacts with ATP. The short motif at tyrosine 91–isoleucine 114 is the Beta-hairpin element. The Helicase C-terminal domain maps to glutamine 429–isoleucine 582. Residues threonine 632–arginine 667 enclose the UVR domain.

It belongs to the UvrB family. As to quaternary structure, forms a heterotetramer with UvrA during the search for lesions. Interacts with UvrC in an incision complex.

It is found in the cytoplasm. Functionally, the UvrABC repair system catalyzes the recognition and processing of DNA lesions. A damage recognition complex composed of 2 UvrA and 2 UvrB subunits scans DNA for abnormalities. Upon binding of the UvrA(2)B(2) complex to a putative damaged site, the DNA wraps around one UvrB monomer. DNA wrap is dependent on ATP binding by UvrB and probably causes local melting of the DNA helix, facilitating insertion of UvrB beta-hairpin between the DNA strands. Then UvrB probes one DNA strand for the presence of a lesion. If a lesion is found the UvrA subunits dissociate and the UvrB-DNA preincision complex is formed. This complex is subsequently bound by UvrC and the second UvrB is released. If no lesion is found, the DNA wraps around the other UvrB subunit that will check the other stand for damage. This chain is UvrABC system protein B, found in Pseudomonas putida (strain ATCC 47054 / DSM 6125 / CFBP 8728 / NCIMB 11950 / KT2440).